A 538-amino-acid chain; its full sequence is NAD(P)H-quinone oxidoreductase chain 4 (538 aa).

A run of 14 helical transmembrane segments spans residues 11-31 (FPWLSLSILFPIVGALIVPFI), 43-63 (YALIISLITFLITVAAYFKGF), 95-115 (MPLILLTSFITSLAVLAAWPV), 119-139 (PKLFFFLILAMDGGQIAVFAV), 143-163 (LLFFLAWELELFPVYLFLAIW), 175-195 (FIIYTAGSSLFILLAGLAMGF), 217-237 (GFQLLCYSGLLIAFGVKLPIV), 251-271 (TAPVHMLLAGILLKMGGYALL), 285-305 (FAPLLIVLGVVNIIYAALTSF), 314-334 (IAYSSISHMGFVLIGIGSFSS), 340-360 (AMLQMVSHGLIGASLFFLVGA), 382-404 (IMFALWTACAFASLALPGMSGFI), 425-445 (IVVASLAAIGVILTPIYLLSM), and 472-492 (IYIIACLLVPIIGIGLYPKIM).

The protein belongs to the complex I subunit 4 family.

It localises to the cellular thylakoid membrane. The catalysed reaction is a plastoquinone + NADH + (n+1) H(+)(in) = a plastoquinol + NAD(+) + n H(+)(out). It catalyses the reaction a plastoquinone + NADPH + (n+1) H(+)(in) = a plastoquinol + NADP(+) + n H(+)(out). Its function is as follows. NDH-1 shuttles electrons from NAD(P)H, via FMN and iron-sulfur (Fe-S) centers, to quinones in the respiratory chain. The immediate electron acceptor for the enzyme in this species is believed to be plastoquinone. Couples the redox reaction to proton translocation (for every two electrons transferred, four hydrogen ions are translocated across the cytoplasmic membrane), and thus conserves the redox energy in a proton gradient. This chain is NAD(P)H-quinone oxidoreductase chain 4, found in Prochlorococcus marinus (strain NATL1A).